The sequence spans 168 residues: 6-pyruvoyl tetrahydrobiopterin synthase (168 aa).

His19 is a Zn(2+) binding site. Cys38 functions as the Proton acceptor in the catalytic mechanism. His44 and His46 together coordinate Zn(2+). Catalysis depends on charge relay system residues His85 and Glu130. Ser159 carries the post-translational modification Phosphoserine. A Phosphothreonine modification is found at Thr161. Phosphoserine is present on residues Ser164, Ser165, and Ser167.

This sequence belongs to the PTPS family. Homohexamer formed of two homotrimers in a head to head fashion. Requires Zn(2+) as cofactor.

It catalyses the reaction 7,8-dihydroneopterin 3'-triphosphate = 6-pyruvoyl-5,6,7,8-tetrahydropterin + triphosphate + H(+). It participates in cofactor biosynthesis; tetrahydrobiopterin biosynthesis; tetrahydrobiopterin from 7,8-dihydroneopterin triphosphate: step 1/3. Its function is as follows. Required for pigment and biopterin synthesis. This Drosophila melanogaster (Fruit fly) protein is 6-pyruvoyl tetrahydrobiopterin synthase (pr).